The following is a 413-amino-acid chain: N5-carboxyaminoimidazole ribonucleotide synthase (413 aa).

Positions 1–21 (MKRVSEQAGNPDGNPQAHVPG) are disordered. Residues Lys-122, Lys-162, 199-202 (EEKV), Glu-207, and 289-290 (NE) each bind ATP. The ATP-grasp domain occupies 126 to 319 (RERLAELGAP…QFEQHLRAVM (194 aa)).

This sequence belongs to the PurK/PurT family. Homodimer.

It carries out the reaction 5-amino-1-(5-phospho-beta-D-ribosyl)imidazole + hydrogencarbonate + ATP = 5-carboxyamino-1-(5-phospho-D-ribosyl)imidazole + ADP + phosphate + 2 H(+). Its pathway is purine metabolism; IMP biosynthesis via de novo pathway; 5-amino-1-(5-phospho-D-ribosyl)imidazole-4-carboxylate from 5-amino-1-(5-phospho-D-ribosyl)imidazole (N5-CAIR route): step 1/2. In terms of biological role, catalyzes the ATP-dependent conversion of 5-aminoimidazole ribonucleotide (AIR) and HCO(3)(-) to N5-carboxyaminoimidazole ribonucleotide (N5-CAIR). This Corynebacterium ammoniagenes (Brevibacterium ammoniagenes) protein is N5-carboxyaminoimidazole ribonucleotide synthase.